We begin with the raw amino-acid sequence, 201 residues long: Peptidyl-tRNA hydrolase (201 aa).

Tyr14 contributes to the tRNA binding site. Catalysis depends on His19, which acts as the Proton acceptor. TRNA contacts are provided by Tyr64, Asn66, and Asn112.

This sequence belongs to the PTH family. Monomer.

It is found in the cytoplasm. It carries out the reaction an N-acyl-L-alpha-aminoacyl-tRNA + H2O = an N-acyl-L-amino acid + a tRNA + H(+). Functionally, hydrolyzes ribosome-free peptidyl-tRNAs (with 1 or more amino acids incorporated), which drop off the ribosome during protein synthesis, or as a result of ribosome stalling. Its function is as follows. Catalyzes the release of premature peptidyl moieties from peptidyl-tRNA molecules trapped in stalled 50S ribosomal subunits, and thus maintains levels of free tRNAs and 50S ribosomes. The chain is Peptidyl-tRNA hydrolase from Bradyrhizobium diazoefficiens (strain JCM 10833 / BCRC 13528 / IAM 13628 / NBRC 14792 / USDA 110).